The following is a 540-amino-acid chain: Phosphomethylpyrimidine synthase (540 aa).

Substrate contacts are provided by residues Asn143, Met172, Tyr201, His237, 257–259 (SRG), 298–301 (DGLR), and Glu337. His341 is a Zn(2+) binding site. Tyr364 lines the substrate pocket. His405 serves as a coordination point for Zn(2+). [4Fe-4S] cluster is bound by residues Cys485, Cys488, and Cys493.

This sequence belongs to the ThiC family. The cofactor is [4Fe-4S] cluster.

It carries out the reaction 5-amino-1-(5-phospho-beta-D-ribosyl)imidazole + S-adenosyl-L-methionine = 4-amino-2-methyl-5-(phosphooxymethyl)pyrimidine + CO + 5'-deoxyadenosine + formate + L-methionine + 3 H(+). Its pathway is cofactor biosynthesis; thiamine diphosphate biosynthesis. In terms of biological role, catalyzes the synthesis of the hydroxymethylpyrimidine phosphate (HMP-P) moiety of thiamine from aminoimidazole ribotide (AIR) in a radical S-adenosyl-L-methionine (SAM)-dependent reaction. This Mycobacterium avium (strain 104) protein is Phosphomethylpyrimidine synthase.